The primary structure comprises 512 residues: MLTMGTALSQQVNANWQTYIMIAVYFLILIVIGFYGYKQATGNLSEYMLGGRSIGPYITALSAGASDMSGWMIMGLPGSVYGTGLSAMWITIGLTLGAYINYFVVAPRLRVYTELAGDAITLPDFFKNRLNDKNNVLKIISGLIIVVFFTLYTHSGFVSGGKLFESAFGLDYHFGLILVAFIVIFYTFFGGYLAVSITDFFQGVIMLIAMVMVPIVAMMNLNGWGTFHDVAAMKPTNLNLFKGLSFIGTISLFSWGLGYFGQPHIIVRFMSIKSHKMLPKARRLGISWMAVGLLGAVAVGLTGIAFVPAYHIKLEDPETLFIVMSQVLFHPLVGGFLLAAILAAIMSTISSQLLVTSSSLTEDFYKLIRGEEKAKTHQKEFVMIGRLSVLVVAIVAIAIAWNPNDTILNLVGNAWAGFGASFSPLVLFALYWKGLTRAGAVSGMVSGALVVIVWIAWIKPLAHINEIFGLYEIIPGFIVSVIVTYVVSKLTKKPGAFVETDLNKVRDIVREK.

Helical transmembrane passes span 16-36, 54-74, 85-105, 139-159, 174-194, 200-220, 240-260, 286-306, 327-347, 381-401, 410-430, 438-458, and 467-487; these read WQTY…GFYG, IGPY…WMIM, LSAM…YFVV, IISG…GFVS, FGLI…GYLA, FFQG…AMMN, LFKG…LGYF, ISWM…GIAF, VLFH…AIMS, FVMI…AIAW, LVGN…LFAL, AGAV…IAWI, and IFGL…TYVV.

The protein belongs to the sodium:solute symporter (SSF) (TC 2.A.21) family.

It is found in the cell membrane. It carries out the reaction L-proline(in) + Na(+)(in) = L-proline(out) + Na(+)(out). Catalyzes the sodium-dependent uptake of extracellular L-proline. Since most S.aureus strains are L-proline auxotrophs, this transporter may aid the bacterial persistence during an infection of tissues with low proline concentrations. The sequence is that of Sodium/proline symporter (putP) from Staphylococcus aureus (strain bovine RF122 / ET3-1).